A 513-amino-acid chain; its full sequence is Serine/threonine protein phosphatase 2A 55 kDa regulatory subunit B alpha isoform (513 aa).

Residue Met1 is modified to N-acetylmethionine. WD repeat units follow at residues 36–75 (QEVDIISAIEFDNSGNHLATGDRGGRVVLFERTDTNNSSG), 112–153 (EIEE…IKKI), 232–270 (AHDYHINSISNNSDGETFISADDLRINLWNLEISNQSFN), 281–321 (DLSE…LCDS), 340–378 (EIIASVSDIKFAKEGRYLLSRDYMTLKLWDINMDAGPVA), and 483–513 (DYTTKLLHLAWHPNENSIACAAANSLYMYYA).

It belongs to the phosphatase 2A regulatory subunit B family. PP2A consists of a common heteromeric enzyme, composed of a catalytic subunit (subunits C), a constant regulatory subunit (subunit A), and a variety of regulatory subunits such as subunits B (the R2/B/PR55/B55, R3/B''/PR72/PR130/PR59 and R5/B'/B56 families). Interacts with SIC/RON3. Expressed ubiquitously.

In terms of biological role, the B regulatory subunit may modulate substrate selectivity and catalytic activity, and may also direct the localization of the catalytic enzyme to a particular subcellular compartment. This is Serine/threonine protein phosphatase 2A 55 kDa regulatory subunit B alpha isoform (PP2AB1) from Arabidopsis thaliana (Mouse-ear cress).